A 379-amino-acid chain; its full sequence is Chaperone protein DnaJ (379 aa).

The J domain occupies 5–70 (DYYETLEVSQ…QKRAAYDQYG (66 aa)). The CR-type zinc-finger motif lies at 135-213 (GKSLEIKVPT…CRGQGRVEKT (79 aa)). Cys-148, Cys-151, Cys-165, Cys-168, Cys-187, Cys-190, Cys-201, and Cys-204 together coordinate Zn(2+). CXXCXGXG motif repeat units lie at residues 148–155 (CEPCDGSG), 165–172 (CSTCHGHG), 187–194 (CPTCSGKG), and 201–208 (CTSCRGQG).

Belongs to the DnaJ family. Homodimer. The cofactor is Zn(2+).

Its subcellular location is the cytoplasm. Functionally, participates actively in the response to hyperosmotic and heat shock by preventing the aggregation of stress-denatured proteins and by disaggregating proteins, also in an autonomous, DnaK-independent fashion. Unfolded proteins bind initially to DnaJ; upon interaction with the DnaJ-bound protein, DnaK hydrolyzes its bound ATP, resulting in the formation of a stable complex. GrpE releases ADP from DnaK; ATP binding to DnaK triggers the release of the substrate protein, thus completing the reaction cycle. Several rounds of ATP-dependent interactions between DnaJ, DnaK and GrpE are required for fully efficient folding. Also involved, together with DnaK and GrpE, in the DNA replication of plasmids through activation of initiation proteins. The protein is Chaperone protein DnaJ of Colwellia maris.